A 350-amino-acid chain; its full sequence is Homoserine O-succinyltransferase (350 aa).

The active-site Acyl-thioester intermediate is Cys146. Residues Lys167 and Ser196 each contribute to the substrate site. The active-site Proton acceptor is His239. Glu241 is an active-site residue. Residue Arg253 coordinates substrate.

The protein belongs to the MetA family.

It is found in the cytoplasm. The enzyme catalyses L-homoserine + succinyl-CoA = O-succinyl-L-homoserine + CoA. It functions in the pathway amino-acid biosynthesis; L-methionine biosynthesis via de novo pathway; O-succinyl-L-homoserine from L-homoserine: step 1/1. Transfers a succinyl group from succinyl-CoA to L-homoserine, forming succinyl-L-homoserine. This Cardiobacterium hominis (strain ATCC 15826 / DSM 8339 / NCTC 10426 / 6573) protein is Homoserine O-succinyltransferase.